The following is a 537-amino-acid chain: MKSYNVLPLAYISLFLMLFYQVWAQFPRECANIEALRRGVCCPDLLPSSGPGTDPCGSSSGRGRCVAVIADSRPHSRHYPHDGKDDREAWPLRFFNRTCQCNDNFSGHNCGTCRPGWRGAACNQKILTVRRNLLDLSPEEKSHFVRALDMAKRTTHPQFVIATRRLEDILGPDGNTPQFENISVYNYFVWTHYYSVKKTFLGTGQESFGDVDFSHEGPAFLTWHRYHLLQLERDMQEMLQEPSFSLPYWNFATGKNVCDVCTDDLMGSRSNFDSTLISPNSVFSQWRVVCESLEEYDTLGTLCNSTEGGPIRRNPAGNVGRPAVQRLPEPQDVTQCLEVRVFDTPPFYSNSTDSFRNTVEGYSAPTGKYDPAVRSLHNLAHLFLNGTGGQTHLSPNDPIFVLLHTFTDAVFDEWLRRYNADISTFPLENAPIGHNRQYNMVPFWPPVTNTEMFVTAPDNLGYAYEVQWPGQEFTVSEIITIAVVAALLLVAAIFGVASCLIRSRSTKNEANQPLLTDHYQRYAEDYEELPNPNHSMV.

The first 24 residues, 1-24, serve as a signal peptide directing secretion; sequence MKSYNVLPLAYISLFLMLFYQVWA. Residues 25–477 are Lumenal, melanosome-facing; the sequence is QFPRECANIE…WPGQEFTVSE (453 aa). Disulfide bonds link Cys30–Cys41, Cys42–Cys65, Cys56–Cys99, Cys101–Cys110, and Cys113–Cys122. N-linked (GlcNAc...) asparagine glycans are attached at residues Asn96 and Asn104. An N-linked (GlcNAc...) asparagine glycan is attached at Asn181. The Zn(2+) site is built by His192, His215, and His224. Disulfide bonds link Cys258/Cys261 and Cys290/Cys303. 2 N-linked (GlcNAc...) asparagine glycosylation sites follow: Asn304 and Asn350. Residues His377 and His381 each contribute to the Zn(2+) site. Asn385 is a glycosylation site (N-linked (GlcNAc...) asparagine). His404 lines the Zn(2+) pocket. A helical transmembrane segment spans residues 478-501; it reads IITIAVVAALLLVAAIFGVASCLI. At 502–537 the chain is on the cytoplasmic side; sequence RSRSTKNEANQPLLTDHYQRYAEDYEELPNPNHSMV.

This sequence belongs to the tyrosinase family. In terms of assembly, monomer. Interacts with ATP7A. Interacts with SLC45A2. Cu(2+) serves as cofactor. Requires Zn(2+) as cofactor. In terms of processing, glycosylated. As to expression, pigment cells.

The protein localises to the melanosome membrane. The enzyme catalyses 2 5,6-dihydroxyindole-2-carboxylate + O2 = 2 indole-5,6-quinone-2-carboxylate + 2 H2O. It functions in the pathway pigment biosynthesis; melanin biosynthesis. Its function is as follows. Plays a role in melanin biosynthesis. Catalyzes the oxidation of 5,6-dihydroxyindole-2-carboxylic acid (DHICA) into indole-5,6-quinone-2-carboxylic acid. May regulate or influence the type of melanin synthesized. Also to a lower extent, capable of hydroxylating tyrosine and producing melanin. This Mus musculus (Mouse) protein is 5,6-dihydroxyindole-2-carboxylic acid oxidase (Tyrp1).